A 300-amino-acid chain; its full sequence is Pantoate--beta-alanine ligase (300 aa).

43 to 50 (MGYLHSGH) provides a ligand contact to ATP. The active-site Proton donor is H50. Q74 provides a ligand contact to (R)-pantoate. Q74 serves as a coordination point for beta-alanine. ATP is bound at residue 162–165 (GQKD). Residue Q168 participates in (R)-pantoate binding. ATP-binding positions include I191 and 199-202 (KSSR).

This sequence belongs to the pantothenate synthetase family. Homodimer.

Its subcellular location is the cytoplasm. The catalysed reaction is (R)-pantoate + beta-alanine + ATP = (R)-pantothenate + AMP + diphosphate + H(+). It functions in the pathway cofactor biosynthesis; (R)-pantothenate biosynthesis; (R)-pantothenate from (R)-pantoate and beta-alanine: step 1/1. Its function is as follows. Catalyzes the condensation of pantoate with beta-alanine in an ATP-dependent reaction via a pantoyl-adenylate intermediate. This chain is Pantoate--beta-alanine ligase (panC), found in Dictyostelium discoideum (Social amoeba).